The primary structure comprises 349 residues: Histidinol-phosphate aminotransferase (349 aa).

Position 206 is an N6-(pyridoxal phosphate)lysine (K206).

The protein belongs to the class-II pyridoxal-phosphate-dependent aminotransferase family. Histidinol-phosphate aminotransferase subfamily. In terms of assembly, homodimer. Pyridoxal 5'-phosphate is required as a cofactor.

It carries out the reaction L-histidinol phosphate + 2-oxoglutarate = 3-(imidazol-4-yl)-2-oxopropyl phosphate + L-glutamate. It participates in amino-acid biosynthesis; L-histidine biosynthesis; L-histidine from 5-phospho-alpha-D-ribose 1-diphosphate: step 7/9. This is Histidinol-phosphate aminotransferase from Streptococcus mutans serotype c (strain ATCC 700610 / UA159).